A 192-amino-acid chain; its full sequence is Adapter protein MecA (192 aa).

This sequence belongs to the MecA family. In terms of assembly, homodimer.

Its function is as follows. Enables the recognition and targeting of unfolded and aggregated proteins to the ClpC protease or to other proteins involved in proteolysis. Acts negatively in the development of competence by binding ComK and recruiting it to the ClpCP protease. When overexpressed, inhibits sporulation. Also involved in Spx degradation by ClpC. The protein is Adapter protein MecA of Oceanobacillus iheyensis (strain DSM 14371 / CIP 107618 / JCM 11309 / KCTC 3954 / HTE831).